The following is a 249-amino-acid chain: MSLCERAASGSALLWPRVLLFGDSITQFSFQQGGWGSLLADRLVRKCDVLNRGFSGYNTRWAKIILPRLIRKGPGMENPVAVTIFFGANDSSLKDENPKQHVPLDEYSANLRDMVQYLRSVDVPRERVILITPPPLCEAAWEKECVLKGCKLNRLNSVVGEYANACLQVARDCGTDVLDLWTLMQKDSQDFSSYLSDGLHLSPMGNEFLFLNLCPLLDKKVSSLPWLLPYWKDVEEAKPELSLLGDGDY.

S24 (nucleophile) is an active-site residue. K63 is modified (N6-succinyllysine). Catalysis depends on D197, which acts as the Proton donor. Catalysis depends on H200, which acts as the Proton acceptor.

Belongs to the 'GDSL' lipolytic enzyme family. IAH1 subfamily.

Its function is as follows. Probable lipase. The sequence is that of Isoamyl acetate-hydrolyzing esterase 1 homolog (Iah1) from Mus musculus (Mouse).